The chain runs to 136 residues: Protein BUNDLE SHEATH DEFECTIVE 2, chloroplastic (136 aa).

A chloroplast-targeting transit peptide spans 1 to 56; the sequence is MANSLCFFSSPPTFCFQSPSKNPKPSHFFSTNDNTSSLVQKRELLQTSRSQSFEVK. The CR-type zinc finger occupies 62-133; the sequence is PQGTKPNSLV…AGFIGGFLST (72 aa). Residues Cys-72, Cys-75, Glu-78, Cys-80, Cys-83, Cys-86, Cys-107, Cys-110, Glu-115, Cys-118, and Cys-121 each coordinate Zn(2+).

Belongs to the BSD2 chaperone family. In terms of assembly, interacts with the RuBisCo large subunit (RbcL) assembled as an intermediate complex made of eight RbcL and eight BSD2 subunits.

It is found in the plastid. Its subcellular location is the chloroplast stroma. Chloroplast chaperone required for RuBisCo biogenesis and translational regulation of the RuBisCo large subunit (RbcL). Stabilizes an end-state assembly intermediate of eight RbcL subunits until the small subunits (RBCSs) become available to produce a complete stable RuBisCo complex containing eight small and eight large subunits. This Arabidopsis thaliana (Mouse-ear cress) protein is Protein BUNDLE SHEATH DEFECTIVE 2, chloroplastic.